We begin with the raw amino-acid sequence, 206 residues long: Putative metal transport protein HI_1621 (206 aa).

The next 6 helical transmembrane spans lie at 6-26 (GVLH…GIAV), 38-58 (LTAL…PVGI), 72-92 (FLGW…VIFF), 94-114 (FGGF…AVIA), 136-156 (IGAG…VLML), and 165-185 (LVWL…IISV).

This sequence belongs to the CbiM family.

The protein resides in the cell membrane. Functionally, may be involved in metal transport. The polypeptide is Putative metal transport protein HI_1621 (Haemophilus influenzae (strain ATCC 51907 / DSM 11121 / KW20 / Rd)).